The following is a 243-amino-acid chain: Myrosinase MB2 (243 aa).

Asn30 is a glycosylation site (N-linked (GlcNAc...) asparagine). Tyr51 serves as a coordination point for substrate. Glu125 functions as the Nucleophile in the catalytic mechanism. Substrate-binding positions include Trp173 and 180–181; that span reads EF. An N-linked (GlcNAc...) asparagine glycan is attached at Asn216.

It belongs to the glycosyl hydrolase 1 family. Homodimer. In vacuoles called myrosin grains of a certain class of cells, myrosin cells, distributed in the cotyledons and the axis of the embryo as well as in different organs of the growing plant.

The protein localises to the vacuole. It catalyses the reaction a thioglucoside + H2O = a sugar + a thiol.. In terms of biological role, degradation of glucosinolates (glucose residue linked by a thioglucoside bound to an amino acid derivative) to glucose, sulfate and any of the products: thiocyanates, isothiocyanates, nitriles, epithionitriles or oxazolidine-2-thiones. The polypeptide is Myrosinase MB2 (Sinapis alba (White mustard)).